The following is a 30-amino-acid chain: U-actitoxin-Bcg2a (30 aa).

An intrachain disulfide couples Cys-7 to Cys-27.

The protein resides in the secreted. The protein localises to the nematocyst. Possible voltage-gated potassium channel (Kv) blocker. In Bunodosoma cangicum (Sea anemone), this protein is U-actitoxin-Bcg2a.